Here is a 276-residue protein sequence, read N- to C-terminus: F-actin-capping protein subunit alpha (276 aa).

The protein belongs to the F-actin-capping protein alpha subunit family. In terms of assembly, heterodimer of an alpha and a beta subunit.

The protein localises to the cytoplasm. It localises to the cytoskeleton. F-actin-capping proteins bind in a Ca(2+)-independent manner to the fast growing ends of actin filaments (barbed end) thereby blocking the exchange of subunits at these ends. Unlike other capping proteins (such as gelsolin and severin), these proteins do not sever actin filaments. The protein is F-actin-capping protein subunit alpha (cap1) of Aspergillus fumigatus (strain ATCC MYA-4609 / CBS 101355 / FGSC A1100 / Af293) (Neosartorya fumigata).